A 432-amino-acid chain; its full sequence is Amino-acid acetyltransferase (432 aa).

The 140-residue stretch at 286–425 (EQLREAGIED…ASLYNFQRNS (140 aa)) folds into the N-acetyltransferase domain.

Belongs to the acetyltransferase family. ArgA subfamily.

It localises to the cytoplasm. It carries out the reaction L-glutamate + acetyl-CoA = N-acetyl-L-glutamate + CoA + H(+). Its pathway is amino-acid biosynthesis; L-arginine biosynthesis; N(2)-acetyl-L-ornithine from L-glutamate: step 1/4. The polypeptide is Amino-acid acetyltransferase (Pseudomonas aeruginosa (strain LESB58)).